A 218-amino-acid polypeptide reads, in one-letter code: Calcineurin B-like protein 5 (218 aa).

EF-hand domains follow at residues 35 to 69 (EVEA…FRNK), 70 to 105 (KTNL…FHPD), 107 to 142 (PEEQ…LLDE), and 151 to 186 (AVEM…NPYV).

The protein belongs to the calcineurin regulatory subunit family. As to quaternary structure, homodimer. Expressed at low levels in roots, shoots, culms, leaves and young spikelets.

Functionally, acts as a calcium sensor. CBL proteins interact with CIPK serine-threonine protein kinases. Binding of a CBL protein to the regulatory NAF domain of a CIPK protein lead to the activation of the kinase in a calcium-dependent manner. This chain is Calcineurin B-like protein 5 (CBL5), found in Oryza sativa subsp. japonica (Rice).